A 338-amino-acid chain; its full sequence is tRNA methyltransferase 10 homolog A (338 aa).

Disordered stretches follow at residues M1–R91 and R296–H338. S22 is subject to Phosphoserine. A coiled-coil region spans residues K52 to P80. Basic residues predominate over residues R61 to Q73. In terms of domain architecture, SAM-dependent MTase TRM10-type spans D88–V279. Residues E308 to S328 are compositionally biased toward basic and acidic residues. The span at T329 to H338 shows a compositional bias: polar residues. S335 carries the post-translational modification Phosphoserine.

This sequence belongs to the class IV-like SAM-binding methyltransferase superfamily. TRM10 family. As to quaternary structure, interacts with tRNA.

It is found in the nucleus. It localises to the nucleolus. The catalysed reaction is guanosine(9) in tRNA + S-adenosyl-L-methionine = N(1)-methylguanosine(9) in tRNA + S-adenosyl-L-homocysteine + H(+). Its function is as follows. S-adenosyl-L-methionine-dependent guanine N(1)-methyltransferase that catalyzes the formation of N(1)-methylguanine at position 9 (m1G9) in tRNAs. Probably not able to catalyze formation of N(1)-methyladenine at position 9 (m1A9) in tRNAs. The polypeptide is tRNA methyltransferase 10 homolog A (TRMT10A) (Bos taurus (Bovine)).